We begin with the raw amino-acid sequence, 176 residues long: Ribosome maturation factor RimM (176 aa).

The region spanning 96-176 (PEDEFYWRDL…QILVDWDPDF (81 aa)) is the PRC barrel domain.

The protein belongs to the RimM family. In terms of assembly, binds ribosomal protein uS19.

It is found in the cytoplasm. In terms of biological role, an accessory protein needed during the final step in the assembly of 30S ribosomal subunit, possibly for assembly of the head region. Essential for efficient processing of 16S rRNA. May be needed both before and after RbfA during the maturation of 16S rRNA. It has affinity for free ribosomal 30S subunits but not for 70S ribosomes. The sequence is that of Ribosome maturation factor RimM from Shewanella woodyi (strain ATCC 51908 / MS32).